Here is a 299-residue protein sequence, read N- to C-terminus: Pyridoxal 5'-phosphate synthase subunit PdxS (299 aa).

Residue D24 participates in D-ribose 5-phosphate binding. Catalysis depends on K81, which acts as the Schiff-base intermediate with D-ribose 5-phosphate. G153 contributes to the D-ribose 5-phosphate binding site. R165 contacts D-glyceraldehyde 3-phosphate. D-ribose 5-phosphate-binding positions include G219 and 240-241 (GS).

Belongs to the PdxS/SNZ family. As to quaternary structure, in the presence of PdxT, forms a dodecamer of heterodimers.

It carries out the reaction aldehydo-D-ribose 5-phosphate + D-glyceraldehyde 3-phosphate + L-glutamine = pyridoxal 5'-phosphate + L-glutamate + phosphate + 3 H2O + H(+). It participates in cofactor biosynthesis; pyridoxal 5'-phosphate biosynthesis. Functionally, catalyzes the formation of pyridoxal 5'-phosphate from ribose 5-phosphate (RBP), glyceraldehyde 3-phosphate (G3P) and ammonia. The ammonia is provided by the PdxT subunit. Can also use ribulose 5-phosphate and dihydroxyacetone phosphate as substrates, resulting from enzyme-catalyzed isomerization of RBP and G3P, respectively. The chain is Pyridoxal 5'-phosphate synthase subunit PdxS from Methanococcus maripaludis (strain C5 / ATCC BAA-1333).